The chain runs to 217 residues: UPF0193 protein EVG1 (217 aa).

This sequence belongs to the UPF0193 (EVG1) family.

The chain is UPF0193 protein EVG1 (C22orf23) from Homo sapiens (Human).